The chain runs to 94 residues: Exodeoxyribonuclease 7 small subunit (94 aa).

The protein belongs to the XseB family. Heterooligomer composed of large and small subunits.

The protein resides in the cytoplasm. It catalyses the reaction Exonucleolytic cleavage in either 5'- to 3'- or 3'- to 5'-direction to yield nucleoside 5'-phosphates.. Functionally, bidirectionally degrades single-stranded DNA into large acid-insoluble oligonucleotides, which are then degraded further into small acid-soluble oligonucleotides. This Ralstonia nicotianae (strain ATCC BAA-1114 / GMI1000) (Ralstonia solanacearum) protein is Exodeoxyribonuclease 7 small subunit.